The following is a 495-amino-acid chain: N-succinylglutamate 5-semialdehyde dehydrogenase (495 aa).

Residue 220–225 (GSAGTG) coordinates NAD(+). Active-site residues include Glu243 and Cys277.

Belongs to the aldehyde dehydrogenase family. AstD subfamily.

The enzyme catalyses N-succinyl-L-glutamate 5-semialdehyde + NAD(+) + H2O = N-succinyl-L-glutamate + NADH + 2 H(+). It functions in the pathway amino-acid degradation; L-arginine degradation via AST pathway; L-glutamate and succinate from L-arginine: step 4/5. In terms of biological role, catalyzes the NAD-dependent reduction of succinylglutamate semialdehyde into succinylglutamate. The chain is N-succinylglutamate 5-semialdehyde dehydrogenase from Enterobacter sp. (strain 638).